A 354-amino-acid polypeptide reads, in one-letter code: MADRVKTVGWAAHDSSGFLSPFQFTRRATGEEDVRLKVLYCGVCHSDLHNIKNEMGFTSYPCVPGHEVVGEVTEVGNKVKKFIIGDKVGVGLFVDSCGECEQCVNDVETYCPKLKMAYLSIDDDGTVIQGGYSKEMVIKERYVFRWPENLPLPAGTPLLGAGSTVYSPMKYYGLDKSGQHLGVVGLGGLGHLAVKFAKAFGLKVTVISTSPSKKDEAINHLGADAFLVSTDQEQTQKAMSTMDGIIDTVSAPHALMPLFSLLKPNGKLIVVGAPNKPVELDILFLVMGRKMLGTSAVGGVKETQEMIDFAAKHGIVADVEVVEMENVNNAMERLAKGDVRYRFVLDIGNATVAV.

Cys44 is a Zn(2+) binding site. NAD(+) is bound at residue 45 to 49 (HSDLH). Zn(2+) contacts are provided by His66, Cys97, Cys100, Cys103, and Cys111. Residues 185–190 (GLGGLG), Lys214, 271–273 (VGA), 295–297 (SAV), and Arg340 contribute to the NAD(+) site.

This sequence belongs to the zinc-containing alcohol dehydrogenase family. Zn(2+) serves as cofactor. Expressed in leaf epidermis.

It catalyses the reaction 3,17-didehydrostemmadenine + NADPH + H2O = (16S)-deshydroxymethyl-stemmadenine + formate + NADP(+). The catalysed reaction is 3,17-didehydrostemmadenine + NADPH + H2O = (16R)-deshydroxymethyl-stemmadenine + formate + NADP(+). The enzyme catalyses 17-dehydrostemmadenine + NADP(+) = 3,17-didehydrostemmadenine + NADPH. It participates in alkaloid biosynthesis. Its function is as follows. Component of iboga and aspidosperma monoterpenoid indole alkaloids (MIAs, e.g. tabersonine and catharanthine) biosynthesis pathway from 19E-geissoschizine. Catalyzes the first oxidation step of the unstable intermediate product resulting from the reaction triggered by the geissoschizine oxidase (GO) in the stemmadenine biosynthesis process from 19E-geissoschizine. This is Protein REDOX 1 from Catharanthus roseus (Madagascar periwinkle).